A 369-amino-acid polypeptide reads, in one-letter code: 3-methylarginine biosynthesis aminotransferase ArgM (369 aa).

Residue K216 is modified to N6-(pyridoxal phosphate)lysine.

The protein belongs to the class-I pyridoxal-phosphate-dependent aminotransferase family. It depends on pyridoxal 5'-phosphate as a cofactor.

The catalysed reaction is L-arginine + 2-oxoglutarate = 5-guanidino-2-oxopentanoate + L-glutamate. It carries out the reaction (3R)-5-guanidino-3-methyl-2-oxopentanoate + L-aspartate = (3R)-3-methyl-L-arginine + oxaloacetate. It participates in antibiotic biosynthesis. Functionally, aminotransferase involved in the formation of the rare amino acid 3-methylarginine (MeArg), which is incorporated into the peptidyl nucleoside antibiotic arginomycin. Catalyzes two rounds of transamination: the transfer of the amino group from L-arginine to 2-oxoglutarate to give glutamate and 5-guanidino-2-oxopentanoic acid, which will be methylated by ArgN. Then, ArgM specifically catalyzes transamination from the donor L-aspartate to the 5-guanidino-3-methyl-2-oxopentanoic acid produced by ArgN, generating the final product, 3-methylarginine. Cannot use arginine analogs, such as D-arginine, L-homoarginine and N-methylarginine for the first transamination. The sequence is that of 3-methylarginine biosynthesis aminotransferase ArgM from Streptomyces arginensis.